Reading from the N-terminus, the 97-residue chain is Secreted Ly-6/uPAR domain-containing protein 2 (97 aa).

Residues 1–22 form the signal peptide; sequence MQLGTGLLLAAVLSLQLAAAEA. 5 disulfides stabilise this stretch: Cys25–Cys47, Cys28–Cys34, Cys40–Cys68, Cys72–Cys88, and Cys89–Cys94. The 71-residue stretch at 25 to 95 folds into the UPAR/Ly6 domain; it reads CHQCTGFGGC…IACCQTSLCN (71 aa).

As to quaternary structure, interacts with CHRNA3, CHRNA4, CHRNA5, CHRNA7, CHRNB2 and CHRNB4. Interacts with CHRM1 and CHRM3 probably in an allosteric manner. In terms of tissue distribution, expressed at highest levels in cervix and esophagus, followed by adult and fetal skin. Expressed at lower levels in brain, lung, stomach, small intestine, colon, rectum, uterus, and thymus. Not detected in spleen nor bone marrow. Up-regulated 3-fold in psoriatic lesional skin. In the epidermis, predominantly produced by keratinocytes of the suprabasal epidermal compartment (at protein level). In attached gingiva, produced at highest levels by basal cells located in the lowermost epithelial layers (at protein level). Detected in serum (at protein level).

It localises to the secreted. In terms of biological role, binds and may modulate the functional properties of nicotinic and muscarinic acetylcholine receptors. May regulate keratinocytes proliferation, differentiation and apoptosis. In vitro moderately inhibits ACh-evoked currents of alpha-3:beta-2-containing nAChRs and strongly these of alpha-4:beta-2-containing nAChRs, modulates alpha-7-containing nAChRs, and inhibits nicotine-induced signaling probably implicating alpha-3:beta-4-containing nAChRs. Proposed to act on alpha-3:beta-2 and alpha-7 nAChRs in an orthosteric, and on mAChRs, such as CHRM1 and CHRM3, in an allosteric manner. The polypeptide is Secreted Ly-6/uPAR domain-containing protein 2 (Homo sapiens (Human)).